Consider the following 212-residue polypeptide: MTAWLGFLAVFLCSWSLRDLVAEACTCVPIHPQDAFCNSDIVIRAKVVGKKLMKDGPFGTMRYTVKQMKMYRGFQIMPHVQYIYTEASESLCGVKLEVNKYQYLITGRVYEGKVYTGLCNWYEKWDRLTLSQRKGLNHRYHLGCGCKIRPCYYLPCFATSKNECIWTDMLSNFGHSGHQAKHYACIQRVEGYCSWYRGWAPPDKTIINATDP.

Positions 1–24 are cleaved as a signal peptide; it reads MTAWLGFLAVFLCSWSLRDLVAEA. A Zn(2+)-binding site is contributed by Cys-25. Involved in metalloproteinase-binding stretches follow at residues 25–28 and 89–90; these read CTCV and ES. Cystine bridges form between Cys-25–Cys-92, Cys-27–Cys-119, Cys-37–Cys-144, Cys-146–Cys-193, Cys-151–Cys-156, and Cys-164–Cys-185. The region spanning 25–144 is the NTR domain; sequence CTCVPIHPQD…GLNHRYHLGC (120 aa).

Belongs to the protease inhibitor I35 (TIMP) family.

It is found in the secreted. The protein resides in the extracellular space. It localises to the extracellular matrix. Its function is as follows. Complexes with metalloproteinases (such as collagenases) and irreversibly inactivates them by binding to their catalytic zinc cofactor. May form part of a tissue-specific acute response to remodeling stimuli. In Gallus gallus (Chicken), this protein is Metalloproteinase inhibitor 3 (TIMP3).